The following is a 710-amino-acid chain: Choline transporter-like protein 2 (710 aa).

Over 1-34 (MEDDGKSPPDSAYGEPKKYDPNFKGPIQNRGCTD) the chain is Cytoplasmic. Residues 35 to 55 (ILCCILIVLGIIAYVAVGIVA) form a helical membrane-spanning segment. The Extracellular segment spans residues 56–236 (WTYGDPRKVI…KIFEDYTVSW (181 aa)). N-linked (GlcNAc...) asparagine glycosylation is found at Asn-147, Asn-190, and Asn-204. A helical transmembrane segment spans residues 237–257 (YWIIIGLIIAMVISLIFVVLL). Residues 258-260 (RFL) lie on the Cytoplasmic side of the membrane. A helical transmembrane segment spans residues 261–281 (AGIMVWVMIVLVIAVMGYGIF). At 282 to 319 (HCYMEYARLKGQSGSDVTLKDIGFQTDIRVYLHLRQTW) the chain is on the extracellular side. Residues 320–340 (LAFMIILCILEVIVILLLIFL) form a helical membrane-spanning segment. The Cytoplasmic segment spans residues 341 to 368 (RKRIMIAIALIKEASRAVGFVMSSLVFP). A helical transmembrane segment spans residues 369–389 (LFTFLLVCLCIAYWAITAVFL). Over 390-458 (STSNEAVYKV…FQIYNAFMFL (69 aa)) the chain is Extracellular. N-linked (GlcNAc...) asparagine glycosylation is found at Asn-401, Asn-418, and Asn-421. Residues 459–481 (WLANFVIALGQVTLAGAFASYYW) traverse the membrane as a helical segment. Over 482-508 (AFKKPDDMPAFPIFSSLGRALRYHTGS) the chain is Cytoplasmic. A helical membrane pass occupies residues 509–529 (LAFGSLILAIVQMIRILLEYL). Topologically, residues 530-567 (DHKLKGADNKCARFLLCCLKCCFWCLEKFIKFLNRNAY) are extracellular. The helical transmembrane segment at 568–588 (IMIAIYGTNFCTSARNAFFLL) threads the bilayer. Residues 589 to 603 (MRNIIRVAVLDKVTD) lie on the Cytoplasmic side of the membrane. Residues 604–624 (FLLFLGKLLVVGCVGILAFFF) traverse the membrane as a helical segment. Residues 625–642 (FSRRIQIVQDTAPTLNYY) are Extracellular-facing. A helical membrane pass occupies residues 643–663 (WVPILTVILGSYLIAHGFFSV). The Cytoplasmic portion of the chain corresponds to 664 to 710 (YGMCVDTLFLCFLEDLERNDGSTERPYFMSGSLQKLLNKSNQTKPDK).

The protein belongs to the CTL (choline transporter-like) family.

The protein localises to the cell membrane. Its subcellular location is the mitochondrion outer membrane. It catalyses the reaction choline(out) + n H(+)(in) = choline(in) + n H(+)(out). The catalysed reaction is ethanolamine(out) + n H(+)(in) = ethanolamine(in) + n H(+)(out). In terms of biological role, choline/H+ antiporter, mainly in mitochodria. Also acts as a low-affinity ethanolamine/H+ antiporter, regulating the supply of extracellular ethanolamine (Etn) for the CDP-Etn pathway, redistribute intracellular Etn and balance the CDP-Cho and CDP-Etn arms of the Kennedy pathway. This is Choline transporter-like protein 2 (slc44a2) from Xenopus laevis (African clawed frog).